We begin with the raw amino-acid sequence, 357 residues long: Uroporphyrinogen decarboxylase (357 aa).

Substrate is bound by residues 27–31 (RQAGR), D77, Y154, S209, and H330.

Belongs to the uroporphyrinogen decarboxylase family. In terms of assembly, homodimer.

Its subcellular location is the cytoplasm. The enzyme catalyses uroporphyrinogen III + 4 H(+) = coproporphyrinogen III + 4 CO2. It functions in the pathway porphyrin-containing compound metabolism; protoporphyrin-IX biosynthesis; coproporphyrinogen-III from 5-aminolevulinate: step 4/4. Catalyzes the decarboxylation of four acetate groups of uroporphyrinogen-III to yield coproporphyrinogen-III. In Acinetobacter baumannii (strain SDF), this protein is Uroporphyrinogen decarboxylase.